A 954-amino-acid polypeptide reads, in one-letter code: Glycine dehydrogenase (decarboxylating) (954 aa).

Lysine 706 carries the post-translational modification N6-(pyridoxal phosphate)lysine.

This sequence belongs to the GcvP family. In terms of assembly, the glycine cleavage system is composed of four proteins: P, T, L and H. The cofactor is pyridoxal 5'-phosphate.

It catalyses the reaction N(6)-[(R)-lipoyl]-L-lysyl-[glycine-cleavage complex H protein] + glycine + H(+) = N(6)-[(R)-S(8)-aminomethyldihydrolipoyl]-L-lysyl-[glycine-cleavage complex H protein] + CO2. Its function is as follows. The glycine cleavage system catalyzes the degradation of glycine. The P protein binds the alpha-amino group of glycine through its pyridoxal phosphate cofactor; CO(2) is released and the remaining methylamine moiety is then transferred to the lipoamide cofactor of the H protein. The polypeptide is Glycine dehydrogenase (decarboxylating) (Thermosynechococcus vestitus (strain NIES-2133 / IAM M-273 / BP-1)).